The chain runs to 370 residues: MSAALRPVPRPGVLEIEAYVPGKSAAPAGVKLHKLSSNETPLGPSLAAIAAMRETGAHLELYPDGSATDLRRAIAGKYGLDPERIVCGAGSDELLSLLTYAYLGPGDEGVYSQYGFLVYRIAILAAGGTPVVAPERDHTADVDAILKAVTPRTRIVYLANPNNPTGTYLPFDEVRRLHAGLPGNVLLVLDAAYAEYVRRNDYAAGLELVAESENVVMTRTFSKVYGLAALRIGWMVAPAAVVDAVNRIRGPFNLSTAAIAAGTAAIADDAHIAAAVAHNDAWLPKVTRALTDLGLQVTPSVGNFVLIHFPDAPGRSAADADAFLTARGLILRRVGAYGLPNALRMTIGSAEANEAVIAALGDFMREQDDA.

Lys-223 is modified (N6-(pyridoxal phosphate)lysine).

The protein belongs to the class-II pyridoxal-phosphate-dependent aminotransferase family. Histidinol-phosphate aminotransferase subfamily. In terms of assembly, homodimer. Pyridoxal 5'-phosphate serves as cofactor.

It catalyses the reaction L-histidinol phosphate + 2-oxoglutarate = 3-(imidazol-4-yl)-2-oxopropyl phosphate + L-glutamate. It participates in amino-acid biosynthesis; L-histidine biosynthesis; L-histidine from 5-phospho-alpha-D-ribose 1-diphosphate: step 7/9. This is Histidinol-phosphate aminotransferase from Methylobacterium nodulans (strain LMG 21967 / CNCM I-2342 / ORS 2060).